Reading from the N-terminus, the 285-residue chain is Ribonuclease Z (285 aa).

Zn(2+) is bound by residues histidine 61, histidine 63, aspartate 65, histidine 66, histidine 152, aspartate 175, and histidine 239. Catalysis depends on aspartate 65, which acts as the Proton acceptor.

This sequence belongs to the RNase Z family. Homodimer. It depends on Zn(2+) as a cofactor.

The catalysed reaction is Endonucleolytic cleavage of RNA, removing extra 3' nucleotides from tRNA precursor, generating 3' termini of tRNAs. A 3'-hydroxy group is left at the tRNA terminus and a 5'-phosphoryl group is left at the trailer molecule.. Zinc phosphodiesterase, which displays some tRNA 3'-processing endonuclease activity. Probably involved in tRNA maturation, by removing a 3'-trailer from precursor tRNA. In Mycobacterium sp. (strain JLS), this protein is Ribonuclease Z.